The sequence spans 101 residues: Rho GTPase-activating protein 39 (101 aa).

A Rho-GAP domain is found at 1 to 96 (YEQCIAHYES…VLIQHLDTSF (96 aa)).

As to expression, preoptic area and testis.

This chain is Rho GTPase-activating protein 39 (Arhgap39), found in Rattus norvegicus (Rat).